Here is a 2784-residue protein sequence, read N- to C-terminus: Cilia- and flagella-associated protein 46 (2784 aa).

The stretch at 129 to 162 (GLEVAAANQPRYQFLVYNASVHHWRVVAPLHRDG) is one TPR 1 repeat. Residues 242–268 (TAAAAKLTELQKDVARLQVHLATLAAA) adopt a coiled-coil conformation. Residues 401–434 (SLAPVVVAAHVKALEQLEDVLTTFTKLADVEGIH) form a TPR 2 repeat. 2 disordered regions span residues 543–562 (SAEP…RSKE) and 581–607 (RDLP…AAAR). Residues 585–595 (HPPPPAPTDPP) are compositionally biased toward pro residues. Residues 644–665 (AVDREMVLLQAQLAHYEAEAAI) are a coiled coil. Residues 670 to 697 (RRRADISPPTRPSPPEVDGEGVRQPPAT) form a disordered region. One copy of the TPR 3 repeat lies at 708-743 (ASVRSMRGAMSVNEPWLTLNNAVQLYNAALPLMQQH). 2 disordered regions span residues 799 to 837 (DAGQ…PAYK) and 929 to 954 (RVNE…KPHG). Acidic residues predominate over residues 802–817 (QELEDDDDEDSLDEDG). The TPR 4 repeat unit spans residues 976–1009 (LELWAKMARAVADAGVWPAALECSAAALAALPGA). Acidic residues predominate over residues 1275–1288 (TGDLDGDGTDDEDD). 2 disordered regions span residues 1275 to 1351 (TGDL…RVPE) and 1640 to 1673 (AAGG…HGQL). Gly residues predominate over residues 1298-1311 (SGGGSSSGRAGGGF). Residues 1646-1658 (GGRESPSPHDDGI) are compositionally biased toward basic and acidic residues. 2 TPR repeats span residues 1712–1745 (HDVW…AADC) and 1854–1886 (MEML…LAAR). Residues 1961–1984 (RLAEVQLAAAEERERLAGADREKA) are a coiled coil. Disordered stretches follow at residues 2068 to 2112 (RPFV…EAAA), 2278 to 2303 (ATAE…PAAA), 2346 to 2389 (AAKG…PGAA), and 2441 to 2465 (LPLP…AGPT). A compositionally biased stretch (pro residues) spans 2069-2083 (PFVPPPKPPGAPKRP). Residues 2087 to 2096 (AEEEEDEEGP) are compositionally biased toward acidic residues. Residues 2097–2112 (DTAAADAAAEAAEAAA) are compositionally biased toward low complexity. A compositionally biased stretch (low complexity) spans 2378–2389 (SKQGPKSGPGAA). Over residues 2450-2461 (DGKKEKKDKKEA) the composition is skewed to basic and acidic residues. One copy of the TPR 7 repeat lies at 2613–2646 (ATGGPCTGLLFLGVGRFAAHVPPAVLASAPLGGC).

Belongs to the CFAP46 family. Part of the PDCP1 complex composed of CFAP46, CFAP54, CFAP74 and CFAP221; the PDCP1 complex binds calmodulin.

The protein localises to the cytoplasm. Its subcellular location is the cytoskeleton. The protein resides in the cilium axoneme. Its function is as follows. As part of the central apparatus of the cilium axoneme plays a role in cilium movement and thereby cell motility. This Chlamydomonas reinhardtii (Chlamydomonas smithii) protein is Cilia- and flagella-associated protein 46.